The chain runs to 119 residues: Large ribosomal subunit protein uL18 (119 aa).

This sequence belongs to the universal ribosomal protein uL18 family. In terms of assembly, part of the 50S ribosomal subunit; part of the 5S rRNA/L5/L18/L25 subcomplex. Contacts the 5S and 23S rRNAs.

Functionally, this is one of the proteins that bind and probably mediate the attachment of the 5S RNA into the large ribosomal subunit, where it forms part of the central protuberance. The polypeptide is Large ribosomal subunit protein uL18 (Paracoccus denitrificans (strain Pd 1222)).